Reading from the N-terminus, the 418-residue chain is Glutamyl-tRNA reductase (418 aa).

Substrate-binding positions include T49–R52, S109, E114–Q116, and Q120. C50 acts as the Nucleophile in catalysis. G189–I194 contributes to the NADP(+) binding site.

Belongs to the glutamyl-tRNA reductase family. Homodimer.

It carries out the reaction (S)-4-amino-5-oxopentanoate + tRNA(Glu) + NADP(+) = L-glutamyl-tRNA(Glu) + NADPH + H(+). Its pathway is porphyrin-containing compound metabolism; protoporphyrin-IX biosynthesis; 5-aminolevulinate from L-glutamyl-tRNA(Glu): step 1/2. In terms of biological role, catalyzes the NADPH-dependent reduction of glutamyl-tRNA(Glu) to glutamate 1-semialdehyde (GSA). The polypeptide is Glutamyl-tRNA reductase (Escherichia fergusonii (strain ATCC 35469 / DSM 13698 / CCUG 18766 / IAM 14443 / JCM 21226 / LMG 7866 / NBRC 102419 / NCTC 12128 / CDC 0568-73)).